The primary structure comprises 438 residues: Enolase (438 aa).

Residues His159 and Glu168 each contribute to the substrate site. Glu211 acts as the Proton donor in catalysis. Mg(2+) is bound by residues Asp246, Glu297, and Asp322. 2 residues coordinate substrate: Glu297 and Asp322. Residue Lys347 is the Proton acceptor of the active site. Substrate contacts are provided by residues 374-377 (SHRS) and Lys398.

It belongs to the enolase family. In terms of assembly, homodimer. Mg(2+) is required as a cofactor.

The protein localises to the cytoplasm. It catalyses the reaction (2R)-2-phosphoglycerate = phosphoenolpyruvate + H2O. Its pathway is carbohydrate degradation; glycolysis; pyruvate from D-glyceraldehyde 3-phosphate: step 4/5. The protein is Enolase (ENO) of Alternaria alternata (Alternaria rot fungus).